The following is a 389-amino-acid chain: Transaldolase (389 aa).

K136 acts as the Schiff-base intermediate with substrate in catalysis. 2 EF-hand domains span residues 330–365 and 365–388; these read ALNQ…FDAI and IDLN…VSKL. Ca(2+) is bound by residues D343, D345, D347, E354, D366, N368, D370, K372, and E377.

The protein belongs to the transaldolase family. Type 1 subfamily.

The protein localises to the cytoplasm. The catalysed reaction is D-sedoheptulose 7-phosphate + D-glyceraldehyde 3-phosphate = D-erythrose 4-phosphate + beta-D-fructose 6-phosphate. The protein operates within carbohydrate degradation; pentose phosphate pathway; D-glyceraldehyde 3-phosphate and beta-D-fructose 6-phosphate from D-ribose 5-phosphate and D-xylulose 5-phosphate (non-oxidative stage): step 2/3. Its function is as follows. Transaldolase is important for the balance of metabolites in the pentose-phosphate pathway. The sequence is that of Transaldolase from Gloeobacter violaceus (strain ATCC 29082 / PCC 7421).